The following is a 471-amino-acid chain: Heat shock 70 kDa protein 13 (471 aa).

Positions 1 to 22 (MAREMTILGSAVLTLLLAGYLA) are cleaved as a signal peptide. The tract at residues 314–352 (EEQDRKEPHSSDTELPKDKLSSADDHRVNSGFGRGLSDK) is disordered. Positions 315–341 (EQDRKEPHSSDTELPKDKLSSADDHRV) are enriched in basic and acidic residues.

It belongs to the heat shock protein 70 family. In terms of assembly, binds UBQLN2.

It is found in the microsome. Its subcellular location is the endoplasmic reticulum. Its function is as follows. Has peptide-independent ATPase activity. The polypeptide is Heat shock 70 kDa protein 13 (HSPA13) (Pongo abelii (Sumatran orangutan)).